The following is a 221-amino-acid chain: Ribonuclease HII (221 aa).

One can recognise an RNase H type-2 domain in the interval 29–220; that stretch reads RRVAGVDEVG…LRDLQAGEIG (192 aa). Positions 35, 36, and 129 each coordinate a divalent metal cation. The tract at residues 198-221 is disordered; the sequence is LGPSPQHRRSFAPLRDLQAGEIGG.

The protein belongs to the RNase HII family. Mn(2+) serves as cofactor. It depends on Mg(2+) as a cofactor.

The protein localises to the cytoplasm. The enzyme catalyses Endonucleolytic cleavage to 5'-phosphomonoester.. Endonuclease that specifically degrades the RNA of RNA-DNA hybrids. This is Ribonuclease HII from Synechococcus sp. (strain JA-3-3Ab) (Cyanobacteria bacterium Yellowstone A-Prime).